The primary structure comprises 543 residues: T-complex protein 1 subunit gamma (543 aa).

It belongs to the TCP-1 chaperonin family.

It localises to the cytoplasm. Its function is as follows. Molecular chaperone; assists the folding of proteins upon ATP hydrolysis. Known to play a role, in vitro, in the folding of actin and tubulin. Plays a role in microtubule polymerization. The chain is T-complex protein 1 subunit gamma from Caenorhabditis elegans.